We begin with the raw amino-acid sequence, 265 residues long: Small ribosomal subunit protein uS3 (265 aa).

In terms of domain architecture, KH type-2 spans 39–107 (VREFLKKKLK…PVHVNIEEIR (69 aa)). Residues 211 to 265 (NDAPVVEEPQEDRRRRPGRPEGRRREGEGRPAGNRRGGAGAGRRAAPGADAKSGE) form a disordered region. Basic and acidic residues predominate over residues 221–239 (EDRRRRPGRPEGRRREGEG).

This sequence belongs to the universal ribosomal protein uS3 family. As to quaternary structure, part of the 30S ribosomal subunit. Forms a tight complex with proteins S10 and S14.

Its function is as follows. Binds the lower part of the 30S subunit head. Binds mRNA in the 70S ribosome, positioning it for translation. This chain is Small ribosomal subunit protein uS3, found in Cupriavidus metallidurans (strain ATCC 43123 / DSM 2839 / NBRC 102507 / CH34) (Ralstonia metallidurans).